The chain runs to 326 residues: Eukaryotic translation initiation factor 3 subunit I (326 aa).

WD repeat units follow at residues 8-47 (GHER…RLGT), 50-89 (GHQG…IIAS), 145-184 (MTES…KVVD), 188-227 (DHAA…CLKT), and 285-326 (GHFG…NIFE).

This sequence belongs to the eIF-3 subunit I family. In terms of assembly, component of the eukaryotic translation initiation factor 3 (eIF-3) complex. The eIF-3 complex interacts with pix.

The protein resides in the cytoplasm. Component of the eukaryotic translation initiation factor 3 (eIF-3) complex, which is involved in protein synthesis of a specialized repertoire of mRNAs and, together with other initiation factors, stimulates binding of mRNA and methionyl-tRNAi to the 40S ribosome. The eIF-3 complex specifically targets and initiates translation of a subset of mRNAs involved in cell proliferation. The polypeptide is Eukaryotic translation initiation factor 3 subunit I (Drosophila pseudoobscura pseudoobscura (Fruit fly)).